Here is a 115-residue protein sequence, read N- to C-terminus: UPF0102 protein NMB2089 (115 aa).

It belongs to the UPF0102 family.

In Neisseria meningitidis serogroup B (strain ATCC BAA-335 / MC58), this protein is UPF0102 protein NMB2089.